The sequence spans 313 residues: Protein FixB (313 aa).

FAD is bound at residue 255-283; that stretch reads LYLAVGISGQIQHMVGANASQTIFAINKD.

Belongs to the ETF alpha-subunit/FixB family. As to quaternary structure, heterodimer of FixA and FixB.

The protein operates within amine and polyamine metabolism; carnitine metabolism. Required for anaerobic carnitine reduction. May bring reductant to CaiA. The polypeptide is Protein FixB (Escherichia coli (strain K12 / MC4100 / BW2952)).